Here is a 581-residue protein sequence, read N- to C-terminus: MSSPAGRRKKKGSGGASPAPARPPPPAAVPAPAAGPAPAPGSPHKRNLYYFSYPLVVGFALLRLLACHLGLLFVWLCQRFSRALMAAKRSSGTAPAPASPSTPAPGPGGEAESVRVFHKQAFEYISIALRIDEEEKGQKEQAVEWYKKGIEELEKGIAVIVTGQGEQYERARRLQAKMMTNLVMAKDRLQLLESGAVPKKKDPLTHASNSLPRSKTVMKSGSTGLSGHHRAPSCSGLSMVSGARPGSGPAATTHKGTSKPNRTNKPSTPTTAVRKKKDLKNFRNVDSNLANLIMNEIVDNGTAVKFDDIAGQELAKQALQEIVILPSLRPELFTGLRAPARGLLLFGPPGNGKTMLAKAVAAESNATFFNISAASLTSKYVGEGEKLVRALFAVARELQPSIIFIDEVDSLLCERREGEHDASRRLKTEFLIEFDGVQSAGDDRVLVMGATNRPQELDEAVLRRFIKRVYVSLPNEETRLLLLKNLLCKQGSPLTQKELAQLARMTDGYSGSDLTALAKDAALGPIRELKPEQVKNMSASEMRNIRLSDFTESLKKIKRSVSPQTLEAYIRWNKDFGDTTV.

The segment covering 1–12 has biased composition (basic residues); that stretch reads MSSPAGRRKKKG. A disordered region spans residues 1-39; sequence MSSPAGRRKKKGSGGASPAPARPPPPAAVPAPAAGPAPA. A required for nuclear localization region spans residues 1–48; that stretch reads MSSPAGRRKKKGSGGASPAPARPPPPAAVPAPAAGPAPAPGSPHKRNL. Over 1 to 54 the chain is Cytoplasmic; that stretch reads MSSPAGRRKKKGSGGASPAPARPPPPAAVPAPAAGPAPAPGSPHKRNLYYFSYP. The interval 1–78 is required for interaction with ATL1; it reads MSSPAGRRKK…LGLLFVWLCQ (78 aa). A required for midbody localization region spans residues 1–191; that stretch reads MSSPAGRRKK…LVMAKDRLQL (191 aa). Residues 1–265 are required for interaction with RTN1; the sequence is MSSPAGRRKK…GTSKPNRTNK (265 aa). The Nuclear localization signal motif lies at 4–11; sequence PAGRRKKK. Over residues 20–39 the composition is skewed to pro residues; the sequence is PARPPPPAAVPAPAAGPAPA. A required for interaction with SSNA1 and microtubules region spans residues 48–85; sequence LYYFSYPLVVGFALLRLLACHLGLLFVWLCQRFSRALM. Residues 55–75 constitute an intramembrane region (helical); that stretch reads LVVGFALLRLLACHLGLLFVW. Residues 57–65 carry the Nuclear export signal motif; that stretch reads VGFALLRLL. At 76-581 the chain is on the cytoplasmic side; that stretch reads LCQRFSRALM…WNKDFGDTTV (506 aa). The disordered stretch occupies residues 90–111; the sequence is SSGTAPAPASPSTPAPGPGGEA. Residues 97–106 show a composition bias toward pro residues; it reads PASPSTPAPG. The region spanning 118-192 is the MIT domain; that stretch reads HKQAFEYISI…VMAKDRLQLL (75 aa). The sufficient for microtubule severing stretch occupies residues 193–581; the sequence is ESGAVPKKKD…WNKDFGDTTV (389 aa). The disordered stretch occupies residues 195 to 277; that stretch reads GAVPKKKDPL…TPTTAVRKKK (83 aa). Over residues 206–225 the composition is skewed to polar residues; that stretch reads HASNSLPRSKTVMKSGSTGL. S210 and S233 each carry phosphoserine. Residues 235-293 are required for interaction with microtubules and microtubule severing; sequence SGLSMVSGARPGSGPAATTHKGTSKPNRTNKPSTPTTAVRKKKDLKNFRNVDSNLANLI. Over residues 254-271 the composition is skewed to polar residues; the sequence is HKGTSKPNRTNKPSTPTT. T271 carries the phosphothreonine modification. The Nuclear localization signal signature appears at 274 to 277; it reads RKKK. 347–354 is a binding site for ATP; that stretch reads GPPGNGKT. S562 is modified (phosphoserine).

The protein belongs to the AAA ATPase family. Spastin subfamily. As to quaternary structure, homohexamer. Mostly monomeric, but assembles into hexameric structure for short periods of time. Oligomerization seems to be a prerequisite for catalytic activity. Binding to ATP in a cleft between two adjacent subunits stabilizes the homohexameric form. Binds to microtubules at least in part via the alpha-tubulin and beta-tubulin tails. The hexamer adopts a ring conformation through which microtubules pass prior to being severed. Does not interact strongly with tubulin heterodimers. Interacts (via MIT domain) with CHMP1B; the interaction is direct. Interacts with SSNA1. Interacts with ATL1. Interacts with RTN1. Interacts with ZFYVE27. Interacts with REEP1. Interacts (via MIT domain) with IST1.

The protein localises to the membrane. It localises to the endoplasmic reticulum. It is found in the midbody. Its subcellular location is the cytoplasm. The protein resides in the cytoskeleton. The protein localises to the microtubule organizing center. It localises to the centrosome. It is found in the perinuclear region. Its subcellular location is the nucleus. The protein resides in the spindle. The protein localises to the cell projection. It localises to the axon. The catalysed reaction is n ATP + n H2O + a microtubule = n ADP + n phosphate + (n+1) alpha/beta tubulin heterodimers.. Allosteric enzyme with a cooperative mechanism; at least two neighbor subunits influence each other strongly in spastin hexamers. Microtubule binding promotes cooperative interactions among spastin subunits. Its function is as follows. ATP-dependent microtubule severing protein that specifically recognizes and cuts microtubules that are polyglutamylated. Preferentially recognizes and acts on microtubules decorated with short polyglutamate tails: severing activity increases as the number of glutamates per tubulin rises from one to eight, but decreases beyond this glutamylation threshold. Severing activity is not dependent on tubulin acetylation or detyrosination. Microtubule severing promotes reorganization of cellular microtubule arrays and the release of microtubules from the centrosome following nucleation. It is critical for the biogenesis and maintenance of complex microtubule arrays in axons, spindles and cilia. SPAST is involved in abscission step of cytokinesis and nuclear envelope reassembly during anaphase in cooperation with the ESCRT-III complex. Recruited at the midbody, probably by IST1, and participates in membrane fission during abscission together with the ESCRT-III complex. Recruited to the nuclear membrane by IST1 and mediates microtubule severing, promoting nuclear envelope sealing and mitotic spindle disassembly during late anaphase. Required for membrane traffic from the endoplasmic reticulum (ER) to the Golgi and endosome recycling. Recruited by IST1 to endosomes and regulates early endosomal tubulation and recycling by mediating microtubule severing. Probably plays a role in axon growth and the formation of axonal branches. The sequence is that of Spastin from Rattus norvegicus (Rat).